Reading from the N-terminus, the 256-residue chain is Ubiquinone biosynthesis O-methyltransferase (256 aa).

Residues R44, G80, D101, and M144 each contribute to the S-adenosyl-L-methionine site.

Belongs to the methyltransferase superfamily. UbiG/COQ3 family.

The catalysed reaction is a 3-demethylubiquinol + S-adenosyl-L-methionine = a ubiquinol + S-adenosyl-L-homocysteine + H(+). It carries out the reaction a 3-(all-trans-polyprenyl)benzene-1,2-diol + S-adenosyl-L-methionine = a 2-methoxy-6-(all-trans-polyprenyl)phenol + S-adenosyl-L-homocysteine + H(+). Its pathway is cofactor biosynthesis; ubiquinone biosynthesis. Its function is as follows. O-methyltransferase that catalyzes the 2 O-methylation steps in the ubiquinone biosynthetic pathway. In Methylocella silvestris (strain DSM 15510 / CIP 108128 / LMG 27833 / NCIMB 13906 / BL2), this protein is Ubiquinone biosynthesis O-methyltransferase.